Here is a 222-residue protein sequence, read N- to C-terminus: uncharacterized protein (222 aa).

6 N-linked (GlcNAc...) asparagine; by host glycosylation sites follow: Asn4, Asn75, Asn84, Asn104, Asn170, and Asn175. Residues 200-220 (LIIIIGIVIILLLIIVMIKTV) form a helical membrane-spanning segment.

The protein localises to the membrane. This is an uncharacterized protein from Acanthamoeba polyphaga (Amoeba).